The sequence spans 533 residues: Peptidyl-prolyl cis-trans isomerase-like 2 (533 aa).

A U-box domain is found at 38 to 111 (KRLPFYCCSL…DEYFCPVTYK (74 aa)). The 155-residue stretch at 284 to 438 (KKSYARIITN…REIKIKQIQM (155 aa)) folds into the PPIase cyclophilin-type domain. Residues 443–519 (FEEYQRRLKN…SNEGEELQKK (77 aa)) adopt a coiled-coil conformation. Residues 454–477 (LTHEANAERENEEMRKRREKEEKM) are compositionally biased toward basic and acidic residues. Positions 454-533 (LTHEANAERE…KTTFGNFDNF (80 aa)) are disordered. The segment covering 523–533 (TKTTFGNFDNF) has biased composition (polar residues).

It belongs to the cyclophilin-type PPIase family. PPIL2 subfamily.

It localises to the nucleus. The enzyme catalyses [protein]-peptidylproline (omega=180) = [protein]-peptidylproline (omega=0). It carries out the reaction S-ubiquitinyl-[E2 ubiquitin-conjugating enzyme]-L-cysteine + [acceptor protein]-L-lysine = [E2 ubiquitin-conjugating enzyme]-L-cysteine + N(6)-ubiquitinyl-[acceptor protein]-L-lysine.. It functions in the pathway protein modification; protein ubiquitination. Functionally, may catalyze the cis-trans isomerization of proline imidic peptide bonds in oligopeptides thereby assisting the folding of proteins. May also function as a chaperone, playing a role in intracellular transport of proteins. May also have a protein ubiquitin ligase activity acting as an E3 ubiquitin protein ligase or as a ubiquitin-ubiquitin ligase promoting elongation of ubiquitin chains on proteins. The polypeptide is Peptidyl-prolyl cis-trans isomerase-like 2 (cyp14) (Rhizopus delemar (strain RA 99-880 / ATCC MYA-4621 / FGSC 9543 / NRRL 43880) (Mucormycosis agent)).